The chain runs to 274 residues: uncharacterized protein (274 aa).

The protein belongs to the PhoU family.

This is an uncharacterized protein from Deinococcus radiodurans (strain ATCC 13939 / DSM 20539 / JCM 16871 / CCUG 27074 / LMG 4051 / NBRC 15346 / NCIMB 9279 / VKM B-1422 / R1).